A 265-amino-acid polypeptide reads, in one-letter code: Small ribosomal subunit protein uS3 (265 aa).

Residues 39-111 (IREFLNENFS…EVILNIIEVR (73 aa)) enclose the KH type-2 domain. The disordered stretch occupies residues 224–250 (FEAGNQRRGQKRRPRNDQPVKDLNKEK). Positions 238-250 (RNDQPVKDLNKEK) are enriched in basic and acidic residues.

It belongs to the universal ribosomal protein uS3 family. As to quaternary structure, part of the 30S ribosomal subunit. Forms a tight complex with proteins S10 and S14.

Binds the lower part of the 30S subunit head. Binds mRNA in the 70S ribosome, positioning it for translation. The sequence is that of Small ribosomal subunit protein uS3 from Acholeplasma laidlawii.